Consider the following 422-residue polypeptide: uncharacterized protein (422 aa).

Residues 1-22 (MIQNNPKSIGSSSNKSARSSGS) are disordered. The span at 7-22 (KSIGSSSNKSARSSGS) shows a compositional bias: low complexity.

This is an uncharacterized protein from Acanthamoeba polyphaga mimivirus (APMV).